The sequence spans 147 residues: Large ribosomal subunit protein uL15 (147 aa).

The segment covering 1-13 (MKLENLKSKEGSR) has biased composition (basic and acidic residues). The interval 1–54 (MKLENLKSKEGSRHKTKRVGRGFGSGIGKTSTRGSKGQKSRKSGHTRPGFEGGQ) is disordered. Basic residues predominate over residues 36–45 (KGQKSRKSGH).

This sequence belongs to the universal ribosomal protein uL15 family. Part of the 50S ribosomal subunit.

In terms of biological role, binds to the 23S rRNA. The sequence is that of Large ribosomal subunit protein uL15 from Malacoplasma penetrans (strain HF-2) (Mycoplasma penetrans).